The following is a 103-amino-acid chain: Small ubiquitin-related modifier 2 (103 aa).

In terms of domain architecture, Ubiquitin-like spans 15-92 (AHINLKVKGQ…IDAMLHQTGG (78 aa)). A Glycyl lysine isopeptide (Gly-Lys) (interchain with K-? in acceptor proteins) cross-link involves residue glycine 92.

Belongs to the ubiquitin family. SUMO subfamily. In terms of assembly, interacts with SAE2, SCE1, SIZ1 and MMS21. Interacts with HSFA2. Covalently attached to ABI5, FLD, GTE3, HSFA2 and ICE1.

It localises to the nucleus. The protein resides in the cytoplasm. Ubiquitin-like protein which can be covalently attached to target lysines as a monomer. Does not seem to be involved in protein degradation and may function as an antagonist of ubiquitin in the degradation process. Required for the massive protein sumoylation in the nucleus induced by heat shock and controlled by SIZ1. The polypeptide is Small ubiquitin-related modifier 2 (Arabidopsis thaliana (Mouse-ear cress)).